The following is a 215-amino-acid chain: CASP-like protein 1U3 (215 aa).

At 1-13 (MHDEEKKEPKWVT) the chain is on the cytoplasmic side. A helical membrane pass occupies residues 14–34 (AVSIAGRIAGMGLAVAAAVLM). Residues 35-68 (STASQCTVYYAAPAASAYGGAARARTVTYSDFPP) are Extracellular-facing. Residues 69 to 89 (FVFLVGAASIAAFLEAIAIFL) traverse the membrane as a helical segment. The Cytoplasmic segment spans residues 90 to 105 (VVWKKGKDKTTKVLMP). Residues 106–126 (LLGVAVPALLYSATGAAFAAV) form a helical membrane-spanning segment. Residues 127 to 161 (SDMSYCSANGKRVSICAGSAAAGGGVSGGTNFCSQ) are Extracellular-facing. The chain crosses the membrane as a helical span at residues 162-182 (VHIAVYLSLAAAVAVSVAEVV). The Cytoplasmic segment spans residues 183–215 (RGLGGSASGGGSDSDSSSSSESGGCDHGCHHKH). Residues 187–215 (GSASGGGSDSDSSSSSESGGCDHGCHHKH) are disordered. Positions 195 to 205 (DSDSSSSSESG) are enriched in low complexity.

This sequence belongs to the Casparian strip membrane proteins (CASP) family. Homodimer and heterodimers.

It is found in the cell membrane. This Sorghum bicolor (Sorghum) protein is CASP-like protein 1U3.